The following is a 701-amino-acid chain: Potassium-transporting ATPase ATP-binding subunit 1 (701 aa).

Positions Met1–Lys26 are disordered. Transmembrane regions (helical) follow at residues Met57 to Phe77, Gly90 to Ala110, Val241 to Leu261, and Ile278 to Ile298. The 4-aspartylphosphate intermediate role is filled by Asp329. Residues Asp366, Glu370, Phe397–Ser404, and Lys416 each bind ATP. Asp539 and Asp543 together coordinate Mg(2+). 3 consecutive transmembrane segments (helical) span residues Phe599 to Ala619, Ala635 to Leu655, and Val681 to Ala701.

This sequence belongs to the cation transport ATPase (P-type) (TC 3.A.3) family. Type IA subfamily. As to quaternary structure, the system is composed of three essential subunits: KdpA, KdpB and KdpC.

It localises to the cell inner membrane. The catalysed reaction is K(+)(out) + ATP + H2O = K(+)(in) + ADP + phosphate + H(+). Its function is as follows. Part of the high-affinity ATP-driven potassium transport (or Kdp) system, which catalyzes the hydrolysis of ATP coupled with the electrogenic transport of potassium into the cytoplasm. This subunit is responsible for energy coupling to the transport system and for the release of the potassium ions to the cytoplasm. The protein is Potassium-transporting ATPase ATP-binding subunit 1 of Nostoc sp. (strain PCC 7120 / SAG 25.82 / UTEX 2576).